Here is a 239-residue protein sequence, read N- to C-terminus: MNKNIVIKSMAALAILTSVTGINAAVVDETQQIANAEKNVTQVKDTNVFPYNGVVSFKDATGFAIEKNTIITNKHVSKDYKVGDRITAHPNGDKGNGGIYKIKNISDYPGNEDISVMNVEENAVERGANGYNFNENVQAFNFAKDAKVDDKIKVIGYPLPAQNTFKQFESTGTVKSIKDNNLNFDAYIEPGNSGSPVLNLNNEVVGVVYGGIGKIGSEYNGAVYFTPQIKEFIQKHIEQ.

An N-terminal signal peptide occupies residues 1–36 (MNKNIVIKSMAALAILTSVTGINAAVVDETQQIANA). Residues histidine 75, aspartate 113, and serine 193 each act as charge relay system in the active site.

Belongs to the peptidase S1B family.

The protein resides in the secreted. This chain is Serine protease SplC (splC), found in Staphylococcus aureus (strain bovine RF122 / ET3-1).